The primary structure comprises 500 residues: DNA polymerase processivity factor (500 aa).

The interval Val388 to Arg500 is disordered. Residues Thr438–Ala449 show a composition bias toward polar residues.

Belongs to the herpesviridae DNA polymerase processivity factor family. As to quaternary structure, interacts with the DNA polymerase catalytic subunit UL30. Interacts with the origin-binding protein.

It localises to the host nucleus. Functionally, plays an essential role in viral DNA replication by acting as the polymerase accessory subunit. Associates with the viral polymerase to increase its processivity and forms high-affinity direct interactions with DNA. Facilitates the origin-binding protein UL9 loading onto DNA thus increasing its ability to assemble into a functional complex capable of unwinding duplex DNA. This chain is DNA polymerase processivity factor (UL42), found in Amazona oratrix (yellow-headed parrot).